A 141-amino-acid chain; its full sequence is Putative nickel-responsive regulator (141 aa).

Residues histidine 80, histidine 91, histidine 93, and cysteine 99 each coordinate Ni(2+).

The protein belongs to the transcriptional regulatory CopG/NikR family. The cofactor is Ni(2+).

In terms of biological role, transcriptional regulator. The chain is Putative nickel-responsive regulator from Methanococcus vannielii (strain ATCC 35089 / DSM 1224 / JCM 13029 / OCM 148 / SB).